A 348-amino-acid chain; its full sequence is Probable mitochondrial adenine nucleotide transporter BTL1 (348 aa).

Solcar repeat units follow at residues serine 46–alanine 129, serine 157–serine 241, and leucine 251–isoleucine 338. Transmembrane regions (helical) follow at residues phenylalanine 52 to isoleucine 72, glycine 104 to glutamate 124, isoleucine 156 to valine 176, phenylalanine 213 to phenylalanine 233, methionine 256 to valine 276, and valine 321 to alanine 341.

The protein belongs to the mitochondrial carrier (TC 2.A.29) family.

The protein resides in the mitochondrion inner membrane. Functionally, probable mitochondrial adenylate carrier that catalyzes the transport of ATP, ADP and AMP. The polypeptide is Probable mitochondrial adenine nucleotide transporter BTL1 (Arabidopsis thaliana (Mouse-ear cress)).